The following is a 404-amino-acid chain: AT-hook motif nuclear-localized protein 6 (404 aa).

Positions 40 to 112 are disordered; sequence TTVVTPLPPP…TPISSSIPLS (73 aa). A compositionally biased stretch (pro residues) spans 45–55; sequence PLPPPPAPSSA. A compositionally biased stretch (low complexity) spans 56–70; it reads PVPTTVTPGSATAST. The Bipartite nuclear localization signal signature appears at 76 to 84; that stretch reads KKKRGRPRK. Positions 76–88 form a DNA-binding region, a.T hook; that stretch reads KKKRGRPRKYAPD. Residues 98–112 show a composition bias toward low complexity; the sequence is PTLSPTPISSSIPLS. The PPC domain maps to 157 to 299; sequence GANFTTHQFT…RVMEAFAPPQ (143 aa). Residues 365-404 form a disordered region; the sequence is AYHGYGNMNTGTTHKEEHEDEDGGDDDDDSGDTRSQSHSG. Acidic residues predominate over residues 382–394; that stretch reads HEDEDGGDDDDDS.

It localises to the nucleus. Transcription factor that specifically binds AT-rich DNA sequences related to the nuclear matrix attachment regions (MARs). This is AT-hook motif nuclear-localized protein 6 from Arabidopsis thaliana (Mouse-ear cress).